The primary structure comprises 199 residues: Recombination protein RecR (199 aa).

Residues Cys-58–Cys-73 form a C4-type zinc finger. A Toprim domain is found at Ser-81–Pro-176.

The protein belongs to the RecR family.

In terms of biological role, may play a role in DNA repair. It seems to be involved in an RecBC-independent recombinational process of DNA repair. It may act with RecF and RecO. This is Recombination protein RecR from Thermoanaerobacter sp. (strain X514).